The following is a 147-amino-acid chain: 3-dehydroquinate dehydratase 2 (147 aa).

The active-site Proton acceptor is the Tyr23. Positions 74, 80, and 87 each coordinate substrate. His100 functions as the Proton donor in the catalytic mechanism. Substrate contacts are provided by residues 101 to 102 (IS) and Arg111.

The protein belongs to the type-II 3-dehydroquinase family. In terms of assembly, homododecamer.

It carries out the reaction 3-dehydroquinate = 3-dehydroshikimate + H2O. It functions in the pathway metabolic intermediate biosynthesis; chorismate biosynthesis; chorismate from D-erythrose 4-phosphate and phosphoenolpyruvate: step 3/7. Its function is as follows. Catalyzes a trans-dehydration via an enolate intermediate. This is 3-dehydroquinate dehydratase 2 (aroQ2) from Agrobacterium fabrum (strain C58 / ATCC 33970) (Agrobacterium tumefaciens (strain C58)).